A 286-amino-acid chain; its full sequence is Enoyl-CoA hydratase ChsH3 (286 aa).

Residues 163-271 (APERAPDLQV…RLVASVVAPT (109 aa)) form the MaoC-like domain. Catalysis depends on residues Asp189 and His194.

The protein belongs to the enoyl-CoA hydratase/isomerase family. As to quaternary structure, homodimer.

It carries out the reaction (22E)-3-oxochola-4,22-dien-24-oyl-CoA + H2O = (22S)-hydroxy-3-oxo-chol-4-ene-24-oyl-CoA. The protein operates within steroid metabolism; cholesterol degradation. Its function is as follows. Degradation of the cholesterol side chain involves 3 multistep beta-oxidation cycles, this is involved in the second cycle. Hydrates bulky steroid enoyl-CoA esters, has highest activity with 3-OCDO-CoA (3-oxochol-4,22-dien-24-oyl-CoA) making (22S)-HOCO-CoA, followed by octenoyl-CoA, with weaker activity on 3-OCDS-CoA (3-oxocholest-4,24-dien-26-oyl-CoA) and none on 3-OPDC-CoA (3-oxo-pregna-4,17-diene-20- carboxyl-CoA). Hydrates the same substrate as EchA19, but the 2 enzymes make different stereoisomers of the product. In Mycobacterium tuberculosis (strain ATCC 25618 / H37Rv), this protein is Enoyl-CoA hydratase ChsH3.